A 481-amino-acid polypeptide reads, in one-letter code: MLKWIKGGISAVTGMAEPEYGKDYIHSVADRVKNKQPYRETSREDFFWQAPDHTNVESVIFYFSDLKTGIFGFAQVIHSNIIGLHTASQFTFRIFDSKNPEDLNIWTSTKLENFYIEGPNFYADNLSVELSEDGESYHIQSSVCDLSVVDLHIRRLTPGAKIGDDPATYYGNNINEPWGSMRHVFWPRNACHGTIKVKKEVIPESDEEESSADEDDNEDEDEESGDSEEESGSEEESDSEEVEITYEDRTITFKEEDPAISTFIMAFQGMKPHHAAKAWNFMFFHSEKYSAVLMEFTTPKSYANTKISAGIITDDKEVLAMTTNNLVEHLNSEIDSVGWKVPKDIKITFKGINTKVKDEQLESENGTEQALQGEDEKEDEKEDEEEEEYKNVAEENKICAVVEGPLNNLVERIDVMGEIPSFVKNIVSGVAGTKPFIYQYADPKSSTLQINGGEKIHGVAWTEVTFISESDVISEESYNEA.

The segment at 1–18 (MLKWIKGGISAVTGMAEP) is peripherally associates with membranes. 2 disordered regions span residues 197 to 251 (VKKE…DRTI) and 358 to 389 (DEQLESENGTEQALQGEDEKEDEKEDEEEEEY). Acidic residues-rich tracts occupy residues 203 to 245 (PESD…VEIT) and 373 to 388 (GEDEKEDEKEDEEEEE).

This sequence belongs to the SVF1 family. Post-translationally, acetylated at the N-terminus in a NatC complex-dependent manner, which is required for membrane targeting.

The protein resides in the golgi apparatus. The protein localises to the cis-Golgi network membrane. It localises to the endoplasmic reticulum membrane. Its subcellular location is the cytoplasm. It is found in the nucleus. Functionally, ceramide-binding protein that may transfer ceramides from the endoplasmic reticulum membrane to the cis-Golgi network membrane, and is thereby required for the biosynthesis of complex sphingolipids. Required for survival in response to oxidative stress. Involved in the diauxic shift. The protein is Ceramide-binding protein SVF1 (SVF1) of Saccharomyces cerevisiae (strain ATCC 204508 / S288c) (Baker's yeast).